Consider the following 215-residue polypeptide: Nascent polypeptide-associated complex subunit alpha-2 (215 aa).

A disordered region spans residues 1–51; it reads MPGEATETVPATEQELPQSQAETGSGTASDSGESVPGIEEQDSTQTTTQKA. Residues 9–32 are compositionally biased toward polar residues; it reads VPATEQELPQSQAETGSGTASDSG. 2 positions are modified to phosphoserine: Ser43 and Ser132. The NAC-A/B domain occupies 70 to 135; sequence SRSEKRARKA…AKIQDLSQQA (66 aa). At Lys142 the chain carries N6-acetyllysine; alternate. Residue Lys142 forms a Glycyl lysine isopeptide (Lys-Gly) (interchain with G-Cter in SUMO2); alternate linkage. A Phosphothreonine modification is found at Thr161. 4 positions are modified to phosphoserine: Ser166, Ser186, Ser191, and Ser203. Positions 176–213 constitute a UBA domain; sequence VEVKDVKLVMSQANVSRAKAVRALKNNSNDIVNAIMEL. Position 214 is a phosphothreonine (Thr214).

Belongs to the NAC-alpha family. As to quaternary structure, part of the nascent polypeptide-associated complex (NAC), consisting of NACA and BTF3. NAC associates with ribosomes through the BTF3 subunit. Both subunits can contact nascent polypeptide chains. In terms of tissue distribution, expressed specifically in testis and skeletal muscle.

Its subcellular location is the cytoplasm. It is found in the nucleus. Its function is as follows. Prevents inappropriate targeting of non-secretory polypeptides to the endoplasmic reticulum (ER). Binds to nascent polypeptide chains as they emerge from the ribosome and blocks their interaction with the signal recognition particle (SRP), which normally targets nascent secretory peptides to the ER. Also reduces the inherent affinity of ribosomes for protein translocation sites in the ER membrane (M sites). In Homo sapiens (Human), this protein is Nascent polypeptide-associated complex subunit alpha-2 (NACA2).